A 402-amino-acid polypeptide reads, in one-letter code: 1-deoxy-D-xylulose 5-phosphate reductoisomerase (402 aa).

NADPH-binding residues include threonine 10, glycine 11, serine 12, isoleucine 13, asparagine 38, and asparagine 124. Residue lysine 125 participates in 1-deoxy-D-xylulose 5-phosphate binding. Glutamate 126 is an NADPH binding site. Aspartate 150 lines the Mn(2+) pocket. 1-deoxy-D-xylulose 5-phosphate contacts are provided by serine 151, glutamate 152, serine 186, and histidine 209. Glutamate 152 is a binding site for Mn(2+). Glycine 215 is an NADPH binding site. 1-deoxy-D-xylulose 5-phosphate contacts are provided by serine 222, asparagine 227, lysine 228, and glutamate 231. Mn(2+) is bound at residue glutamate 231.

This sequence belongs to the DXR family. Mg(2+) is required as a cofactor. The cofactor is Mn(2+).

It carries out the reaction 2-C-methyl-D-erythritol 4-phosphate + NADP(+) = 1-deoxy-D-xylulose 5-phosphate + NADPH + H(+). Its pathway is isoprenoid biosynthesis; isopentenyl diphosphate biosynthesis via DXP pathway; isopentenyl diphosphate from 1-deoxy-D-xylulose 5-phosphate: step 1/6. Catalyzes the NADPH-dependent rearrangement and reduction of 1-deoxy-D-xylulose-5-phosphate (DXP) to 2-C-methyl-D-erythritol 4-phosphate (MEP). The chain is 1-deoxy-D-xylulose 5-phosphate reductoisomerase from Vibrio vulnificus (strain CMCP6).